A 570-amino-acid chain; its full sequence is Sulfite reductase [NADPH] hemoprotein beta-component (570 aa).

[4Fe-4S] cluster is bound by residues Cys434, Cys440, Cys479, and Cys483. Cys483 provides a ligand contact to siroheme.

It belongs to the nitrite and sulfite reductase 4Fe-4S domain family. Alpha(8)-beta(8). The alpha component is a flavoprotein, the beta component is a hemoprotein. Siroheme serves as cofactor. [4Fe-4S] cluster is required as a cofactor.

The catalysed reaction is hydrogen sulfide + 3 NADP(+) + 3 H2O = sulfite + 3 NADPH + 4 H(+). The protein operates within sulfur metabolism; hydrogen sulfide biosynthesis; hydrogen sulfide from sulfite (NADPH route): step 1/1. Component of the sulfite reductase complex that catalyzes the 6-electron reduction of sulfite to sulfide. This is one of several activities required for the biosynthesis of L-cysteine from sulfate. The chain is Sulfite reductase [NADPH] hemoprotein beta-component from Salmonella newport (strain SL254).